The following is a 352-amino-acid chain: Protein-glutamate methylesterase/protein-glutamine glutaminase (352 aa).

A Response regulatory domain is found at 5–123; sequence RILIVDDSVI…SKEKAIEYIR (119 aa). Residue aspartate 56 is modified to 4-aspartylphosphate. The CheB-type methylesterase domain maps to 166–352; the sequence is EIVAIGVSTG…LAEEIIRRIG (187 aa). Catalysis depends on residues serine 173, histidine 200, and aspartate 296.

This sequence belongs to the CheB family. Phosphorylated by CheA. Phosphorylation of the N-terminal regulatory domain activates the methylesterase activity.

It localises to the cytoplasm. It carries out the reaction [protein]-L-glutamate 5-O-methyl ester + H2O = L-glutamyl-[protein] + methanol + H(+). The catalysed reaction is L-glutaminyl-[protein] + H2O = L-glutamyl-[protein] + NH4(+). In terms of biological role, involved in chemotaxis. Part of a chemotaxis signal transduction system that modulates chemotaxis in response to various stimuli. Catalyzes the demethylation of specific methylglutamate residues introduced into the chemoreceptors (methyl-accepting chemotaxis proteins or MCP) by CheR. Also mediates the irreversible deamidation of specific glutamine residues to glutamic acid. The polypeptide is Protein-glutamate methylesterase/protein-glutamine glutaminase (Trichodesmium erythraeum (strain IMS101)).